Reading from the N-terminus, the 1088-residue chain is RNA-directed RNA polymerase (1088 aa).

Residues 501 to 687 (LSYGDVTRFL…AKRYIAGGKI (187 aa)) form the RdRp catalytic domain.

The protein belongs to the reoviridae RNA-directed RNA polymerase family. Interacts with VP3 (Potential). Interacts with VP2; this interaction activates VP1. Interacts with NSP5; this interaction is probably necessary for the formation of functional virus factories. Interacts with NSP2; this interaction is weak. The cofactor is Mg(2+).

The protein localises to the virion. It catalyses the reaction RNA(n) + a ribonucleoside 5'-triphosphate = RNA(n+1) + diphosphate. Its function is as follows. RNA-directed RNA polymerase that is involved in both transcription and genome replication. Together with VP3 capping enzyme, forms an enzyme complex positioned near the channels situated at each of the five-fold vertices of the core. Following infection, the outermost layer of the virus is lost, leaving a double-layered particle (DLP) made up of the core and VP6 shell. VP1 then catalyzes the transcription of fully conservative plus-strand genomic RNAs that are extruded through the DLP's channels into the cytoplasm where they function as mRNAs for translation of viral proteins. One copy of each of the viral (+)RNAs is also recruited during core assembly, together with newly synthesized polymerase complexes and VP2. The polymerase of these novo-formed particles catalyzes the synthesis of complementary minus-strands leading to dsRNA formation. To do so, the polymerase specifically recognizes and binds 4 bases 5'-UGUG-3' in the conserved 3'-sequence of plus-strand RNA templates. VP2 presumably activates the autoinhibited VP1-RNA complex to coordinate packaging and genome replication. Once dsRNA synthesis is complete, the polymerase switches to the transcriptional mode, thus providing secondary transcription. This chain is RNA-directed RNA polymerase, found in Rotavirus A (isolate RVA/Human/United States/WI61/1983/G9P1A[8]) (RV-A).